The primary structure comprises 267 residues: 4-hydroxy-tetrahydrodipicolinate reductase (267 aa).

Position 8–13 (8–13 (GASGRM)) interacts with NAD(+). An NADP(+)-binding site is contributed by Arg35. Residues 98–100 (GTT) and 122–125 (APNM) each bind NAD(+). His155 serves as the catalytic Proton donor/acceptor. His156 is a binding site for (S)-2,3,4,5-tetrahydrodipicolinate. The active-site Proton donor is Lys159. 165–166 (GT) lines the (S)-2,3,4,5-tetrahydrodipicolinate pocket.

Belongs to the DapB family.

The protein resides in the cytoplasm. It carries out the reaction (S)-2,3,4,5-tetrahydrodipicolinate + NAD(+) + H2O = (2S,4S)-4-hydroxy-2,3,4,5-tetrahydrodipicolinate + NADH + H(+). The enzyme catalyses (S)-2,3,4,5-tetrahydrodipicolinate + NADP(+) + H2O = (2S,4S)-4-hydroxy-2,3,4,5-tetrahydrodipicolinate + NADPH + H(+). The protein operates within amino-acid biosynthesis; L-lysine biosynthesis via DAP pathway; (S)-tetrahydrodipicolinate from L-aspartate: step 4/4. In terms of biological role, catalyzes the conversion of 4-hydroxy-tetrahydrodipicolinate (HTPA) to tetrahydrodipicolinate. The chain is 4-hydroxy-tetrahydrodipicolinate reductase from Hahella chejuensis (strain KCTC 2396).